We begin with the raw amino-acid sequence, 242 residues long: Type III pantothenate kinase (242 aa).

Residue 6–13 (DAGNTRIK) participates in ATP binding. Substrate is bound by residues Y90 and 97-100 (GADR). D99 functions as the Proton acceptor in the catalytic mechanism. T122 contacts ATP. Residue T172 participates in substrate binding.

This sequence belongs to the type III pantothenate kinase family. As to quaternary structure, homodimer. Requires NH4(+) as cofactor. K(+) serves as cofactor.

It is found in the cytoplasm. It catalyses the reaction (R)-pantothenate + ATP = (R)-4'-phosphopantothenate + ADP + H(+). It functions in the pathway cofactor biosynthesis; coenzyme A biosynthesis; CoA from (R)-pantothenate: step 1/5. Functionally, catalyzes the phosphorylation of pantothenate (Pan), the first step in CoA biosynthesis. This Aromatoleum aromaticum (strain DSM 19018 / LMG 30748 / EbN1) (Azoarcus sp. (strain EbN1)) protein is Type III pantothenate kinase.